Here is a 326-residue protein sequence, read N- to C-terminus: Probable cell division protein WhiA (326 aa).

The H-T-H motif DNA-binding region spans 275–308; that stretch reads SLDELGRLADPPMTKDAIAGRIRRLLAMADKRAL.

The protein belongs to the WhiA family.

Involved in cell division and chromosome segregation. The protein is Probable cell division protein WhiA of Arthrobacter sp. (strain FB24).